The primary structure comprises 1145 residues: Nucleolar protein 6 (1145 aa).

The segment at 1 to 46 (MQKKRNRAGPPQQEAASDDGEMSDSSDKMEVAQGKGKSAVKRAPDA) is disordered.

Belongs to the NRAP family. Part of the small subunit (SSU) processome, composed of more than 70 proteins and the RNA chaperone small nucleolar RNA (snoRNA) U3.

It localises to the nucleus. Its subcellular location is the nucleolus. The protein localises to the chromosome. In terms of biological role, part of the small subunit (SSU) processome, first precursor of the small eukaryotic ribosomal subunit. During the assembly of the SSU processome in the nucleolus, many ribosome biogenesis factors, an RNA chaperone and ribosomal proteins associate with the nascent pre-rRNA and work in concert to generate RNA folding, modifications, rearrangements and cleavage as well as targeted degradation of pre-ribosomal RNA by the RNA exosome. The chain is Nucleolar protein 6 (nol6) from Xenopus tropicalis (Western clawed frog).